The sequence spans 334 residues: N-acetyl-gamma-glutamyl-phosphate reductase (334 aa).

Cysteine 154 is a catalytic residue.

It belongs to the NAGSA dehydrogenase family. Type 1 subfamily.

It localises to the cytoplasm. The catalysed reaction is N-acetyl-L-glutamate 5-semialdehyde + phosphate + NADP(+) = N-acetyl-L-glutamyl 5-phosphate + NADPH + H(+). Its pathway is amino-acid biosynthesis; L-arginine biosynthesis; N(2)-acetyl-L-ornithine from L-glutamate: step 3/4. Functionally, catalyzes the NADPH-dependent reduction of N-acetyl-5-glutamyl phosphate to yield N-acetyl-L-glutamate 5-semialdehyde. This Salmonella typhi protein is N-acetyl-gamma-glutamyl-phosphate reductase.